A 737-amino-acid polypeptide reads, in one-letter code: Glycogen [starch] synthase, muscle (737 aa).

Ser8 is modified (phosphoserine; by AMPK and PKA). Ser11 carries the post-translational modification Phosphoserine. Lys39 is a binding site for UDP. Residues His205 and Arg211 each contribute to the UDP-alpha-D-glucose site. The alpha-D-glucose 6-phosphate site is built by His291, Glu292, Gln294, His297, and Lys301. Position 331 (Arg331) interacts with UDP. Arg331 lines the UDP-alpha-D-glucose pocket. At Ser412 the chain carries Phosphoserine. His501 contributes to the alpha-D-glucose 6-phosphate binding site. UDP-alpha-D-glucose-binding residues include Glu510, Trp512, and Gly513. Position 515 (Thr515) interacts with UDP. Alpha-D-glucose 6-phosphate-binding residues include Arg582 and Arg586. Positions 634–737 are disordered; it reads YRYPRPASVP…PTSSLGEERN (104 aa). Phosphoserine is present on residues Ser641, Ser645, Ser649, and Ser652. The residue at position 653 (Ser653) is a Phosphoserine; by GSK3-alpha and GSK3-beta. At Ser657 the chain carries Phosphoserine; by CK2. Acidic residues predominate over residues 658-681; sequence EDEEDPRNGPLEEDGERYDEDEEA. Residues 682–695 are compositionally biased toward basic and acidic residues; it reads AKDRRNIRAPEWPR. Ser698 carries the post-translational modification Phosphoserine. The segment covering 698–714 has biased composition (polar residues); the sequence is SCTSSTSGSKRNSVDTA. The residue at position 700 (Thr700) is a Phosphothreonine. Phosphoserine is present on Ser710. A compositionally biased stretch (low complexity) spans 715 to 737; it reads TSSSLSTPSEPLSPTSSLGEERN. Thr721 is subject to Phosphothreonine. Phosphoserine occurs at positions 727 and 731.

The protein belongs to the glycosyltransferase 3 family. Part of the GYS1-GYG1 complex, a heterooctamer composed of a tetramer of GYS1 and 2 dimers of GYG1, where each GYS1 protomer binds to one GYG1 subunit (via GYG1 C-terminus); the GYS1 tetramer may dissociate from GYG1 dimers to continue glycogen polymerization on its own. Post-translationally, phosphorylation at Ser-8 by AMPK inactivates the enzyme activity. Primed phosphorylation at Ser-657 (site 5) by CSNK2A1 and CSNK2A2 is required for inhibitory phosphorylation at Ser-641 (site 3a), Ser-645 (site 3b), Ser-649 (site 3c) and Ser-653 (site 4) by GSK3A an GSK3B. Phosphorylated at Ser-641 by DYRK2, leading to inactivation. Phosphorylated at Ser-641 by PASK, leading to inactivation; phosphorylation by PASK is inhibited by glycogen. Dephosphorylation at Ser-641 and Ser-645 by PP1 activates the enzyme. Expressed in skeletal muscle and most other cell types where glycogen is present.

It carries out the reaction [(1-&gt;4)-alpha-D-glucosyl](n) + UDP-alpha-D-glucose = [(1-&gt;4)-alpha-D-glucosyl](n+1) + UDP + H(+). Its pathway is glycan biosynthesis; glycogen biosynthesis. Its activity is regulated as follows. Allosteric activation by glucose-6-phosphate. Phosphorylation reduces enzyme activity by constraining a tense conformation of the tetramer through inter-subunit interaction. Phosphorylation reduces the activity towards UDP-glucose. When in the non-phosphorylated state, glycogen synthase does not require glucose-6-phosphate as an allosteric activator; when phosphorylated it does. In terms of biological role, glycogen synthase participates in the glycogen biosynthetic process along with glycogenin and glycogen branching enzyme. Extends the primer composed of a few glucose units formed by glycogenin by adding new glucose units to it. In this context, glycogen synthase transfers the glycosyl residue from UDP-Glc to the non-reducing end of alpha-1,4-glucan. This Homo sapiens (Human) protein is Glycogen [starch] synthase, muscle.